The primary structure comprises 223 residues: Small ribosomal subunit protein uS3 (223 aa).

In terms of domain architecture, KH type-2 spans 39–108 (IRNFVKKNSY…NILINIVEVK (70 aa)).

It belongs to the universal ribosomal protein uS3 family. As to quaternary structure, part of the 30S ribosomal subunit. Forms a tight complex with proteins S10 and S14.

Binds the lower part of the 30S subunit head. Binds mRNA in the 70S ribosome, positioning it for translation. This is Small ribosomal subunit protein uS3 from Clostridium botulinum (strain Okra / Type B1).